Reading from the N-terminus, the 629-residue chain is DNA mismatch repair protein MutL (629 aa).

This sequence belongs to the DNA mismatch repair MutL/HexB family.

Functionally, this protein is involved in the repair of mismatches in DNA. It is required for dam-dependent methyl-directed DNA mismatch repair. May act as a 'molecular matchmaker', a protein that promotes the formation of a stable complex between two or more DNA-binding proteins in an ATP-dependent manner without itself being part of a final effector complex. The protein is DNA mismatch repair protein MutL of Haemophilus influenzae (strain 86-028NP).